We begin with the raw amino-acid sequence, 240 residues long: 7-cyano-7-deazaguanine synthase (240 aa).

18 to 28 (FSGGQDSTTCL) contributes to the ATP binding site. Zn(2+)-binding residues include C197, C206, C209, and C212.

Belongs to the QueC family. Zn(2+) serves as cofactor.

The catalysed reaction is 7-carboxy-7-deazaguanine + NH4(+) + ATP = 7-cyano-7-deazaguanine + ADP + phosphate + H2O + H(+). It functions in the pathway purine metabolism; 7-cyano-7-deazaguanine biosynthesis. Its function is as follows. Catalyzes the ATP-dependent conversion of 7-carboxy-7-deazaguanine (CDG) to 7-cyano-7-deazaguanine (preQ(0)). This chain is 7-cyano-7-deazaguanine synthase, found in Shewanella baltica (strain OS223).